Consider the following 156-residue polypeptide: Small ribosomal subunit protein uS7 (156 aa).

It belongs to the universal ribosomal protein uS7 family. In terms of assembly, part of the 30S ribosomal subunit. Contacts proteins S9 and S11.

Functionally, one of the primary rRNA binding proteins, it binds directly to 16S rRNA where it nucleates assembly of the head domain of the 30S subunit. Is located at the subunit interface close to the decoding center, probably blocks exit of the E-site tRNA. The polypeptide is Small ribosomal subunit protein uS7 (Hahella chejuensis (strain KCTC 2396)).